The sequence spans 234 residues: MACPQLPPLLLLVLVVLLKAGVNYNTPFTDIVTSENSMETSPVSSLISSPFAHSTHSSGEPPKSYSSTMSLETDSITHLSPSSSGATPTIQPSPSSTDSRMIPSSPQPETITHPSSGSPSAELTPSSHSTLPSSESLTPHWSPTSHSPGTEPLTSTDQTLEPPGPAPGDTGPRELHRNPSVVVVVCLLVSLLLIGSVVMAVRFCHRNESKFENLDEVSMGSVNDRLSFAHHLQE.

Positions 1–24 (MACPQLPPLLLLVLVVLLKAGVNY) are cleaved as a signal peptide. Topologically, residues 25 to 180 (NTPFTDIVTS…GPRELHRNPS (156 aa)) are extracellular. The span at 41 to 121 (SPVSSLISSP…THPSSGSPSA (81 aa)) shows a compositional bias: polar residues. Residues 41 to 174 (SPVSSLISSP…PAPGDTGPRE (134 aa)) form a disordered region. The segment covering 122–140 (ELTPSSHSTLPSSESLTPH) has biased composition (low complexity). The segment covering 141–159 (WSPTSHSPGTEPLTSTDQT) has biased composition (polar residues). A helical membrane pass occupies residues 181-201 (VVVVVCLLVSLLLIGSVVMAV). The Cytoplasmic portion of the chain corresponds to 202–234 (RFCHRNESKFENLDEVSMGSVNDRLSFAHHLQE).

It localises to the membrane. This is Protein CIST1 from Homo sapiens (Human).